A 62-amino-acid polypeptide reads, in one-letter code: Protein DsrB (62 aa).

It belongs to the DsrB family.

The sequence is that of Protein DsrB from Shigella flexneri serotype 5b (strain 8401).